Here is a 195-residue protein sequence, read N- to C-terminus: Glycerol-3-phosphate acyltransferase (195 aa).

5 helical membrane-spanning segments follow: residues Phe-3–Leu-23, Leu-52–Gln-72, Ile-80–Phe-100, Leu-113–Leu-133, and Leu-147–Ile-167.

This sequence belongs to the PlsY family. As to quaternary structure, probably interacts with PlsX.

The protein resides in the cell inner membrane. It carries out the reaction an acyl phosphate + sn-glycerol 3-phosphate = a 1-acyl-sn-glycero-3-phosphate + phosphate. It functions in the pathway lipid metabolism; phospholipid metabolism. In terms of biological role, catalyzes the transfer of an acyl group from acyl-phosphate (acyl-PO(4)) to glycerol-3-phosphate (G3P) to form lysophosphatidic acid (LPA). This enzyme utilizes acyl-phosphate as fatty acyl donor, but not acyl-CoA or acyl-ACP. This is Glycerol-3-phosphate acyltransferase from Ehrlichia ruminantium (strain Gardel).